The following is a 274-amino-acid chain: Large ribosomal subunit protein uL2 (274 aa).

The segment at 221–256 (RGTAMNPVDHPHGGGEGRNFGKHPVTPWGVPTKGYK) is disordered.

This sequence belongs to the universal ribosomal protein uL2 family. Part of the 50S ribosomal subunit. Forms a bridge to the 30S subunit in the 70S ribosome.

Functionally, one of the primary rRNA binding proteins. Required for association of the 30S and 50S subunits to form the 70S ribosome, for tRNA binding and peptide bond formation. It has been suggested to have peptidyltransferase activity; this is somewhat controversial. Makes several contacts with the 16S rRNA in the 70S ribosome. The polypeptide is Large ribosomal subunit protein uL2 (Hahella chejuensis (strain KCTC 2396)).